A 493-amino-acid chain; its full sequence is EGF-containing fibulin-like extracellular matrix protein 1 (493 aa).

The N-terminal stretch at 1 to 17 (MLKALFLTMLTLALVKS) is a signal peptide. The 46-residue stretch at 26 to 71 (YTQCTDGYEWDPVRQQCKDIDECDIVPDACKGGMKCVNHYGGYLCL) folds into the EGF-like 1; atypical domain. The 41-residue stretch at 173 to 213 (DIDECTAGTHNCRADQVCINLRGSFACQCPPGYQKRGEQCV) folds into the EGF-like 2; calcium-binding domain. Intrachain disulfides connect Cys-177–Cys-190, Cys-184–Cys-199, Cys-201–Cys-212, Cys-218–Cys-228, Cys-224–Cys-237, Cys-239–Cys-252, Cys-258–Cys-268, Cys-264–Cys-277, Cys-279–Cys-292, Cys-298–Cys-309, Cys-305–Cys-318, Cys-320–Cys-332, Cys-338–Cys-350, Cys-344–Cys-359, and Cys-365–Cys-377. In terms of domain architecture, EGF-like 3; calcium-binding spans 214 to 253 (DIDECTIPPYCHQRCVNTPGSFYCQCSPGFQLAANNYTCV). Asn-249 carries an N-linked (GlcNAc...) asparagine glycan. An EGF-like 4; calcium-binding domain is found at 254–293 (DINECDASNQCAQQCYNILGSFICQCNQGYELSSDRLNCE). The segment at 259–493 (DASNQCAQQC…LTIIVGPFSF (235 aa)) is mediates interaction with TIMP3. Residues 294–333 (DIDECRTSSYLCQYQCVNEPGKFSCMCPQGYQVVRSRTCQ) form the EGF-like 5; calcium-binding domain. The region spanning 334–378 (DINECETTNECREDEMCWNYHGGFRCYPRNPCQDPYILTPENRCV) is the EGF-like 6; calcium-binding domain.

Belongs to the fibulin family. Interacts with ECM1. Interacts with TIMP3.

It localises to the secreted. The protein resides in the extracellular space. Its subcellular location is the extracellular matrix. Binds EGFR, the EGF receptor, inducing EGFR autophosphorylation and the activation of downstream signaling pathways. May play a role in cell adhesion and migration. May function as a negative regulator of chondrocyte differentiation. In the olfactory epithelium, it may regulate glial cell migration, differentiation and the ability of glial cells to support neuronal neurite outgrowth. This Macaca fascicularis (Crab-eating macaque) protein is EGF-containing fibulin-like extracellular matrix protein 1 (EFEMP1).